A 75-amino-acid chain; its full sequence is Small ribosomal subunit protein bS18c (75 aa).

Belongs to the bacterial ribosomal protein bS18 family. As to quaternary structure, part of the 30S ribosomal subunit.

The protein resides in the plastid. It localises to the chloroplast. The polypeptide is Small ribosomal subunit protein bS18c (rps18) (Anthoceros angustus (Hornwort)).